A 641-amino-acid chain; its full sequence is MTVNARGPEGRTDGAVPEGAGGMKKLAGISLAALGVVFGDIGTSPLYAIRECFHGDYGIAASNANILGVLSLLFWALILIVSLKYLTFIMRADNEGEGGILALTALIIGQSIKKKKDRWVLVSIGLFGASVLLGEAMITPAISVLSATEGLQIIAPAFADMVIPATVVILAGLFLFQHNGTARLGALFGPIILLWFFCLGTLGIIQIIQYPQILEAVMPWYGINFLLNNQLHGFLVLGAVFLAVTGAEALYADMGHFGRRPIRLTWVLFVLPALLLNYFGQGAFLLASPEASSHPFYALVPSWAMIPMVLLATVATVIASQALITGVYSITQQAMQLGYLPRLTVTHTSASHIGQIYVPAANWALMAATIGLVLGFGSSSRLAAAYGASMTTTMLISTILFFFVARDLWKWRPPVLWALVSLFAVVDLSFFGASMSKLFHGAWFPLAVGLLMFTLMNTWKQGRRLLMRQLQDRTLTVDGFLDSLALQEPQRVPGQAVYLTANPDIVPIALLHNLRHNKVLHSEVALFHFSSERVPRVPNSKKVEFVRLKDGFTQVVARYGFLEYPNIRQVLELANALGLNFKPEAISFFLSREKIVADEKTKILPSRKKMFALMARNALSATAYYGLPSGQVIEIGVQVQI.

12 helical membrane-spanning segments follow: residues Ile-29 to Ile-49, Ile-66 to Leu-86, Trp-119 to Thr-139, Pro-156 to Phe-176, Gly-185 to Ile-205, Leu-231 to Tyr-251, Trp-266 to Leu-286, Ala-298 to Ile-318, Ile-356 to Phe-376, Ala-384 to Val-404, Val-415 to Met-435, and Leu-438 to Thr-458.

It belongs to the HAK/KUP transporter (TC 2.A.72) family.

It is found in the cell inner membrane. The enzyme catalyses K(+)(in) + H(+)(in) = K(+)(out) + H(+)(out). Its function is as follows. Transport of potassium into the cell. Likely operates as a K(+):H(+) symporter. The chain is Probable potassium transport system protein Kup from Chlorobium phaeovibrioides (strain DSM 265 / 1930) (Prosthecochloris vibrioformis (strain DSM 265)).